A 345-amino-acid polypeptide reads, in one-letter code: Src kinase-associated phosphoprotein 1 (345 aa).

In terms of domain architecture, PH spans 109–212; that stretch reads KIFKQGYLER…WVEQIQFLVK (104 aa). A disordered region spans residues 226–274; sequence ETYDDIESTESSPVVGLTNDSENSLQEDDVYESIPGDEETEESEDENYE. Positions 250–272 are enriched in acidic residues; that stretch reads LQEDDVYESIPGDEETEESEDEN. One can recognise an SH3 domain in the interval 283–344; it reads FYGDYYQGLW…PKDYLTLAFD (62 aa).

It belongs to the SKAP family. Homodimer. Phosphorylated on tyrosines.

It is found in the cytoplasm. Its subcellular location is the nucleus. The protein localises to the cell membrane. Positively regulates T-cell receptor signaling. Required for optimal conjugation between T-cells and antigen-presenting cells. The polypeptide is Src kinase-associated phosphoprotein 1 (skap1) (Xenopus tropicalis (Western clawed frog)).